Here is a 427-residue protein sequence, read N- to C-terminus: MRELYLKTLKKEVVPSEGCTEPIAIAYAASIAAEYLKGEIKEVNIYLSKNVIKNALGVGIPGTGGVGIEIAAALGISIQKSYKKLTILSNFTEDELKKAKEIVDKNIINIKQKNTNKALYIEVELLSETSKAKVIIEDTHTNVTLIECDDEIIMDNNSEVSEDLEEDYNLFKIADIYNFAKEADFDDIKFILESAKMNEKVSEEGLKGDYGLQVGSKIIQKGNFNLFSNDASNKIIAASAAASDARMDGCAMPIMTTAGSGNQGIACSIPVAQTSRLLDKSEEELARALVLSNLVTIRIKKHMGRLSPLCGAGIAGATGASCGITYLLGGDLENINYCINNMISDLSGMICDGAKETCALKIATGTNAAIQCANLAINGISATANDGIVAKDVEETIESIETLIQNGFKNVDDTILNIMLEKKKNNK.

This sequence belongs to the UPF0597 family.

This chain is UPF0597 protein CPR_0790, found in Clostridium perfringens (strain SM101 / Type A).